The following is a 1272-amino-acid chain: MPNEDNELQKAIENHHNQLLNQDKENADRNGSVIEDLPLYGTSINQQSTPGDVDDGKHLLYPDIATNLPLKTSDRLLDDILCDTIFLNSTDPKVMQKGLQSRGILKESMLSYSTFRSSIRPNCLGSLTDQVVFQTKSEYDSISCPKYNKIHVFQAVIFNPSLAEQQISTFDDIVKIPIYHLKVSVKVRQELERLKKHVGVTQFHSLDHLHEYDRVDLSTFDSSDPNLLDYGIYVSDDTNKLILIEIFKPEFNSPEEHESFTADAIKKRYNAMCVKNESLDKSETPSQVDCFYTLFKIFKGPLTRKSKAEPTKTIDSGNLALNTHLNPEWLTSKYGFQASSEIDEETNEIFTEYVPPDMVDYVNDLETRKIRESFVRKCLQLIFWGQLSTSLLAPNSPLKNTKSVKGMSSLQTSFSTLPWFHLLGESRARILLNSNEQTHSPLDAEPHFINLSVSHYYTDRDIIRNYESLSSLDPENIGLYFDALTYIANRKGAYQLIAYCGKQDIIGQEALENALLMFKINPKECNISELNEATLLSIYKYETSNKSQVTSNHLTNLKNALRLLAKYTKSDKLKFYVDHEPYRALSQAYDTLSIDESVDEDIIKTAYSVKINDSPGLKLDCDRALYTIAISKRSLDLFNFLTEECPQFSNYYGPEKLDYQEALKLLQVNENASDETILKIFKQKWFDENVYEPDQFLILRAALTKISIERNSTLITNFLLTGTIDPNSLPPENWPTGINNIGNTCYLNSLLQYYFSIAPLRRYVLEYQKTVENFNDHLSNSGHIRRIGGREISRGEVERSIQFIYQLRNLFYAMVHTRERCVTPSKELAYLAFAPSNVEVEFEVEGNKVVDQTGVLSDSKKETTDDAFTTKIKDTSLIDLEMEDGLNGDVGTDANRKKNESNDAEVSENEDTTGLTSPTRVAKISSDQLENALEMGRQQDVTECIGNVLFQIESGSEPIRYDEDNEQYDLVKQLFYGTTKQSIVPLSATNKVRTKVERFLSLLINIGDHPKDIYDAFDSYFKDEYLTMEEYGDVIRTVAVTTFPTILQVQIQRVYYDRERLMPFKSIEPLPFKEVIYMDRYADTENPLLLAKKKETEEMKQKLKVMKNRQRELLSRDDSGLTRKDAFLESIKLLESDTIKKTPLKIEAANDVIKTLRNNVQNIDNELMKLYNDINSLEEKISHQFDDFKEYGYSLFSVFIHRGEASYGHYWIYIKDRNRNGIWRKYNDETISEVQEEEVFNFNEGNTATPYFLVYVKQGQEGDIEPLKRILK.

The USP domain maps to 736–1258 (TGINNIGNTC…TPYFLVYVKQ (523 aa)). C745 acts as the Nucleophile in catalysis. The segment at 884–918 (DGLNGDVGTDANRKKNESNDAEVSENEDTTGLTSP) is disordered. The segment covering 902-911 (NDAEVSENED) has biased composition (acidic residues). S907 carries the phosphoserine modification. H1209 (proton acceptor) is an active-site residue.

This sequence belongs to the peptidase C19 family. In terms of assembly, forms a ternary complex with RSP5 and RUP1. Interacts with RSP5. Interacts with FZO1.

The enzyme catalyses Thiol-dependent hydrolysis of ester, thioester, amide, peptide and isopeptide bonds formed by the C-terminal Gly of ubiquitin (a 76-residue protein attached to proteins as an intracellular targeting signal).. In terms of biological role, has an ATP-independent isopeptidase activity, cleaving at the C-terminus of the ubiquitin moiety in natural or engineered linear fusion proteins, irrespective of their size or the presence of an N-terminal extension to ubiquitin. Hydrolyzes polyubiquitinated 'Lys-63' polyubiquitin chains in RPO21, producing mono-ubiquitinated RNA polymerase II. Removes ubiquitin chains that initiate proteolysis of FZO1 and inhibit mitochondrial fusion. This chain is Ubiquitin carboxyl-terminal hydrolase 2 (UBP2), found in Saccharomyces cerevisiae (strain ATCC 204508 / S288c) (Baker's yeast).